We begin with the raw amino-acid sequence, 356 residues long: GTPase Obg (356 aa).

Positions 1–159 (MKFLDEAKVY…RWIWLRMKLI (159 aa)) constitute an Obg domain. Residues 160-327 (ADAGLVGLPN…ALRKLADVVG (168 aa)) form the OBG-type G domain. Residues 166–173 (GLPNAGKS), 191–195 (FTTLH), 212–215 (DIPG), 279–282 (NKID), and 308–310 (SGA) each bind GTP. Mg(2+) contacts are provided by serine 173 and threonine 193. The segment at 327-356 (GEQPVSSKAKNAVESAATEEPWAAPVPPQG) is disordered.

Belongs to the TRAFAC class OBG-HflX-like GTPase superfamily. OBG GTPase family. As to quaternary structure, monomer. The cofactor is Mg(2+).

The protein resides in the cytoplasm. In terms of biological role, an essential GTPase which binds GTP, GDP and possibly (p)ppGpp with moderate affinity, with high nucleotide exchange rates and a fairly low GTP hydrolysis rate. Plays a role in control of the cell cycle, stress response, ribosome biogenesis and in those bacteria that undergo differentiation, in morphogenesis control. This Bradyrhizobium sp. (strain ORS 278) protein is GTPase Obg.